A 498-amino-acid chain; its full sequence is Beta-1,3-glucosyltransferase (498 aa).

Over 1–6 the chain is Cytoplasmic; the sequence is MRPPAC. A helical; Signal-anchor for type II membrane protein membrane pass occupies residues 7–27; that stretch reads WWLLAPPALLALLTCSLAFGL. Residues 28-498 lie on the Lumenal side of the membrane; that stretch reads ASEDTKKEVK…ETQKGFREEL (471 aa). N-linked (GlcNAc...) asparagine glycosylation is present at asparagine 336. Residues 495 to 498 carry the Prevents secretion from ER motif; that stretch reads REEL.

The protein belongs to the glycosyltransferase 31 family. Widely expressed, with highest levels in testis and uterus.

The protein resides in the endoplasmic reticulum membrane. Its pathway is protein modification; protein glycosylation. Its function is as follows. O-glucosyltransferase that transfers glucose toward fucose with a beta-1,3 linkage. Specifically glucosylates O-linked fucosylglycan on TSP type-1 domains of proteins, thereby contributing to elongation of O-fucosylglycan. In Homo sapiens (Human), this protein is Beta-1,3-glucosyltransferase.